The chain runs to 792 residues: Kinesin-like protein KIFC2 (792 aa).

Disordered stretches follow at residues 22-45 (AAAV…RRRP) and 142-184 (QGTQ…QEHQ). Polar residues predominate over residues 142–169 (QGTQPTCPVQPSTLDGSLSQEESSSQPT). The stretch at 186–347 (LQLEEEQRVW…ARMASLRQGC (162 aa)) forms a coiled coil. The region spanning 409-732 (NIRVLCRLRP…LKFAERVGQV (324 aa)) is the Kinesin motor domain. 486–493 (GQTGTGKT) is a binding site for ATP. The tract at residues 734–792 (LGPARRRRAPRSGTPSSLSTDTPLTGTSCTPTPSPGSPPSTSPNSCSGLTLEPPGDPPP) is disordered. The segment covering 744 to 764 (RSGTPSSLSTDTPLTGTSCTP) has biased composition (low complexity). Over residues 765 to 774 (TPSPGSPPST) the composition is skewed to pro residues.

The protein belongs to the TRAFAC class myosin-kinesin ATPase superfamily. Kinesin family. Present in axons and dendrites of neurons in the central and peripheral nervous systems.

It localises to the cytoplasm. It is found in the cytoskeleton. May play a role in microtubule-dependent retrograde axonal transport. May function as the motor for the transport of multivesicular body (MVB)-like organelles in dendrites. In Mus musculus (Mouse), this protein is Kinesin-like protein KIFC2 (Kifc2).